We begin with the raw amino-acid sequence, 348 residues long: Lipopolysaccharide heptosyltransferase 2 (348 aa).

The protein belongs to the glycosyltransferase 9 family.

It carries out the reaction an L-alpha-D-Hep-(1-&gt;5)-[alpha-Kdo-(2-&gt;4)]-alpha-Kdo-(2-&gt;6)-lipid A + ADP-L-glycero-beta-D-manno-heptose = an L-alpha-D-Hep-(1-&gt;3)-L-alpha-D-Hep-(1-&gt;5)-[alpha-Kdo-(2-&gt;4)]-alpha-Kdo-(2-&gt;6)-lipid A + ADP + H(+). The protein operates within bacterial outer membrane biogenesis; LPS core biosynthesis. Glycosyltransferase involved in the biosynthesis of the core oligosaccharide region of lipopolysaccharide (LPS). Catalyzes the addition of the second heptose unit to the heptosyl-Kdo2-lipid A module. The chain is Lipopolysaccharide heptosyltransferase 2 from Salmonella typhimurium (strain LT2 / SGSC1412 / ATCC 700720).